Here is a 556-residue protein sequence, read N- to C-terminus: Glutamine--tRNA ligase (556 aa).

Residues 34–44 (PEPNGYLHIGH) carry the 'HIGH' region motif. ATP-binding positions include 35–37 (EPN) and 41–47 (HIGHAKS). L-glutamine is bound by residues Asp-67 and Tyr-212. Residues Thr-231, 261-262 (RL), and 269-271 (MSK) contribute to the ATP site. Positions 268 to 272 (VMSKR) match the 'KMSKS' region motif.

The protein belongs to the class-I aminoacyl-tRNA synthetase family. As to quaternary structure, monomer.

The protein localises to the cytoplasm. It catalyses the reaction tRNA(Gln) + L-glutamine + ATP = L-glutaminyl-tRNA(Gln) + AMP + diphosphate. This Vibrio campbellii (strain ATCC BAA-1116) protein is Glutamine--tRNA ligase.